Reading from the N-terminus, the 323-residue chain is Methenyltetrahydromethanopterin cyclohydrolase (323 aa).

This sequence belongs to the MCH family.

It localises to the cytoplasm. The enzyme catalyses 5,10-methenyl-5,6,7,8-tetrahydromethanopterin + H2O = N(5)-formyl-5,6,7,8-tetrahydromethanopterin + H(+). It functions in the pathway one-carbon metabolism; methanogenesis from CO(2); 5,10-methenyl-5,6,7,8-tetrahydromethanopterin from CO(2): step 3/3. Catalyzes the reversible interconversion of 5-formyl-H(4)MPT to methenyl-H(4)MPT(+). The polypeptide is Methenyltetrahydromethanopterin cyclohydrolase (Methanococcus maripaludis (strain C7 / ATCC BAA-1331)).